A 253-amino-acid polypeptide reads, in one-letter code: 5'/3'-nucleotidase SurE (253 aa).

Residues Asp8, Asp9, Ser39, and Asn92 each coordinate a divalent metal cation.

It belongs to the SurE nucleotidase family. It depends on a divalent metal cation as a cofactor.

The protein resides in the cytoplasm. The catalysed reaction is a ribonucleoside 5'-phosphate + H2O = a ribonucleoside + phosphate. It catalyses the reaction a ribonucleoside 3'-phosphate + H2O = a ribonucleoside + phosphate. The enzyme catalyses [phosphate](n) + H2O = [phosphate](n-1) + phosphate + H(+). Its function is as follows. Nucleotidase with a broad substrate specificity as it can dephosphorylate various ribo- and deoxyribonucleoside 5'-monophosphates and ribonucleoside 3'-monophosphates with highest affinity to 3'-AMP. Also hydrolyzes polyphosphate (exopolyphosphatase activity) with the preference for short-chain-length substrates (P20-25). Might be involved in the regulation of dNTP and NTP pools, and in the turnover of 3'-mononucleotides produced by numerous intracellular RNases (T1, T2, and F) during the degradation of various RNAs. The polypeptide is 5'/3'-nucleotidase SurE (Sodalis glossinidius (strain morsitans)).